The sequence spans 63 residues: DNA-directed RNA polymerase 7 kDa subunit (63 aa).

The protein belongs to the poxviridae DNA-directed RNA polymerase 7 kDa subunit family. As to quaternary structure, the DNA-dependent RNA polymerase used for intermediate and late genes expression consists of eight subunits 147 kDa, 133 kDa, 35 kDa, 30 kDa, 22 kDa, 19 kDa, 18 kDa and 7 kDa totalling more than 500 kDa in mass. The same holoenzyme, with the addition of the transcription-specificity factor RAP94, is used for early gene expression.

It localises to the virion. The enzyme catalyses RNA(n) + a ribonucleoside 5'-triphosphate = RNA(n+1) + diphosphate. Its function is as follows. Part of the DNA-dependent RNA polymerase which catalyzes the transcription of viral DNA into RNA using the four ribonucleoside triphosphates as substrates. Responsible for the transcription of early, intermediate and late genes. DNA-dependent RNA polymerase associates with the early transcription factor (ETF) thereby allowing the early genes transcription. Late transcription, and probably also intermediate transcription, require newly synthesized RNA polymerase. The polypeptide is DNA-directed RNA polymerase 7 kDa subunit (RPO7) (Homo sapiens (Human)).